We begin with the raw amino-acid sequence, 1280 residues long: Pullulanase A (1280 aa).

The signal sequence occupies residues 1 to 44 (MRKTPSHTEKKMVYSIRSLKNGTGSVLIGASLVLLAMATPTISS). Positions 42-132 (ISSDESTPTT…VTTETKAEEP (91 aa)) are disordered. Over residues 48–61 (TPTTNEPNNRNTTT) the composition is skewed to low complexity. Polar residues predominate over residues 79-90 (DISSPGNANASL). Residues 115–126 (EPTTSTSPVTTE) are compositionally biased toward low complexity. Substrate contacts are provided by residues 156 to 158 (WTW), Trp168, Asp214, 263 to 265 (WYW), Trp276, Lys318, and Asn323. Residues Ser661 and Tyr663 each coordinate Ca(2+). Substrate-binding positions include 667-668 (YD) and Phe743. Asp778 serves as the catalytic Nucleophile. Glu807 acts as the Proton donor in catalysis. Residue Trp809 coordinates substrate. The Ca(2+) site is built by Met828, Thr831, and Asp832. The substrate site is built by Asp839, Arg842, and Tyr849. Residues Asp882 and Asp886 each coordinate Ca(2+). Substrate contacts are provided by residues Asn896, Lys969, and 989 to 991 (DSY). Residue Asp992 participates in Ca(2+) binding. The tract at residues 1140–1248 (VSQNGTSHES…TPDKQAELPN (109 aa)) is disordered. Residues 1149 to 1196 (STAEEKPDSTPSKPEHQNEASHPAHQDPAPEARPDSTKPDAKVADAEN) are compositionally biased toward basic and acidic residues. Residues 1205-1218 (SQAEQPAQEAQASS) show a composition bias toward low complexity. The short motif at 1246 to 1250 (LPNTG) is the LPXTG sorting signal element. Thr1249 carries the pentaglycyl murein peptidoglycan amidated threonine modification. A propeptide spans 1250-1280 (GIKNENKLLFAGISLLALLGLGFLLKNKKEN) (removed by sortase).

It belongs to the glycosyl hydrolase 13 family.

It localises to the secreted. It is found in the cell wall. The protein localises to the cell surface. The catalysed reaction is Hydrolysis of (1-&gt;6)-alpha-D-glucosidic linkages in pullulan, amylopectin and glycogen, and in the alpha- and beta-limit dextrins of amylopectin and glycogen.. With respect to regulation, inhibited by 4-O-alpha-D-glucopyranosylmoranoline (G1M). In terms of biological role, virulence factor. Involved in the degradation of glycogen of the mammalian host cells. Hydrolyzes the alpha-1,6-branchpoints of glycogen. Hydrolyzes pullulan. Does not hydrolyze dextran. Binds to mouse lung alveolar type II cells that are rich in glycogen stores. Is an alpha-glucan-specific carbohydrate-binding protein, which binds to amylose (pure alpha-(1,4)-linked glucose), amylopectin (alpha-(1,4)-linked glucose with alpha-(1,6) branch points), pullulan (linear polymer of mixed alpha-(1,4)- and alpha-(1,6)-linked glucose) and glycogen (similar to amylopectin with more frequent alpha-(1,6) branch points) in vitro. Does not bind to dextran (a linear polymer of alpha-(1,6)-linked glucose). This Streptococcus pneumoniae serotype 4 (strain ATCC BAA-334 / TIGR4) protein is Pullulanase A.